Here is a 179-residue protein sequence, read N- to C-terminus: Orotate phosphoribosyltransferase (179 aa).

Residues Arg94, Lys95, Lys98, His100, and Glu120 to Ser128 contribute to the 5-phospho-alpha-D-ribose 1-diphosphate site. Positions 124 and 152 each coordinate orotate.

The protein belongs to the purine/pyrimidine phosphoribosyltransferase family. PyrE subfamily. As to quaternary structure, homodimer. Mg(2+) is required as a cofactor.

The enzyme catalyses orotidine 5'-phosphate + diphosphate = orotate + 5-phospho-alpha-D-ribose 1-diphosphate. Its pathway is pyrimidine metabolism; UMP biosynthesis via de novo pathway; UMP from orotate: step 1/2. Functionally, catalyzes the transfer of a ribosyl phosphate group from 5-phosphoribose 1-diphosphate to orotate, leading to the formation of orotidine monophosphate (OMP). The protein is Orotate phosphoribosyltransferase of Mycobacterium leprae (strain TN).